The sequence spans 104 residues: Large ribosomal subunit protein bL21 (104 aa).

Residues 81-90 (QGYRRHHGHR) are compositionally biased toward basic residues. Residues 81–104 (QGYRRHHGHRQPYTQVKITGISAG) are disordered.

Belongs to the bacterial ribosomal protein bL21 family. As to quaternary structure, part of the 50S ribosomal subunit. Contacts protein L20.

This protein binds to 23S rRNA in the presence of protein L20. The sequence is that of Large ribosomal subunit protein bL21 from Halorhodospira halophila (strain DSM 244 / SL1) (Ectothiorhodospira halophila (strain DSM 244 / SL1)).